We begin with the raw amino-acid sequence, 236 residues long: Putative glutamine amidotransferase-like protein YvdE (236 aa).

The 220-residue stretch at 17 to 236 (SPFWWNKVSY…IFEIFANGTI (220 aa)) folds into the Glutamine amidotransferase type-1 domain.

The protein is Putative glutamine amidotransferase-like protein YvdE (yvdE) of Lactococcus lactis subsp. lactis (strain IL1403) (Streptococcus lactis).